We begin with the raw amino-acid sequence, 431 residues long: Enolase (431 aa).

Gln-166 contributes to the (2R)-2-phosphoglycerate binding site. Glu-208 serves as the catalytic Proton donor. Mg(2+)-binding residues include Asp-245, Glu-288, and Asp-315. (2R)-2-phosphoglycerate-binding residues include Lys-340, Arg-369, Ser-370, and Lys-391. Lys-340 functions as the Proton acceptor in the catalytic mechanism.

It belongs to the enolase family. It depends on Mg(2+) as a cofactor.

Its subcellular location is the cytoplasm. It is found in the secreted. It localises to the cell surface. The catalysed reaction is (2R)-2-phosphoglycerate = phosphoenolpyruvate + H2O. It functions in the pathway carbohydrate degradation; glycolysis; pyruvate from D-glyceraldehyde 3-phosphate: step 4/5. In terms of biological role, catalyzes the reversible conversion of 2-phosphoglycerate (2-PG) into phosphoenolpyruvate (PEP). It is essential for the degradation of carbohydrates via glycolysis. This Clostridium botulinum (strain Loch Maree / Type A3) protein is Enolase.